Consider the following 462-residue polypeptide: MARQLSVILVALTLTTALAENFPTRTSAPSDCPQADQGCWCHKNFAQCWSTYDDSRLTEEIGSRITRLELLYQPNEEVVTYIRRMSALREIRISEDGMSLDCSCDLVDAMDDKGITLVNQDELEIRNCRQQGWSRDTMTARPFLIECRRFRIQDDDRRKRRDAEQDSDDVTKRASPRKGDKPAGHKLKDLAPKDTHHLVSIDDVEKHPATDFFNFISGHRRTRRSTGTNEEVSDDSGRSARKKRYGNMNYPQPMNQPMGGGNYPGQPPQQNYAPQGMGGPVGGGGMGGAVGAGAMGGPVGGGGGGMGGPVGGANGIGESVEDEMSVDSDYSSLGGETTISAKVIQDIKNLLGATKIDLPVDINDPYYLGLLLRHLRHHSNLLANIGDPEVREQVLSAMQEEEEEEENDAANGVRENVLNNLNAPGQGGYGGTQGGMRGGAGGGMMGNQGMGGQGYNQGYMQG.

The first 19 residues, Met-1–Ala-19, serve as a signal peptide directing secretion. A propeptide spanning residues Glu-20 to Arg-244 is cleaved from the precursor. 2 disordered regions span residues Asp-155–Asp-194 and Arg-221–Gly-278. Positions Leu-372 to Asn-380 are fucose-binding domain.

It belongs to the bindin family.

Its subcellular location is the cytoplasmic vesicle. It is found in the secretory vesicle. The protein localises to the acrosome lumen. Its function is as follows. Species-specific sea urchin sperm protein required for adhesion of sperm to the egg surface during fertilization. Bindin coats the acrosomal process after it is externalized by the acrosome reaction. It binds to sulfated, fucose-containing polysaccharides on the vitelline layer receptor proteoglycans which cover the egg plasma membrane. The polypeptide is Bindin (Lytechinus variegatus (Green sea urchin)).